The following is a 309-amino-acid chain: Malate dehydrogenase (309 aa).

NAD(+) contacts are provided by residues 10-15 and Asp34; that span reads GAGNVG. Substrate contacts are provided by Arg83 and Arg89. Residues Asn96 and 119 to 121 contribute to the NAD(+) site; that span reads VSN. Residues Asn121 and Arg152 each coordinate substrate. His176 acts as the Proton acceptor in catalysis.

Belongs to the LDH/MDH superfamily. MDH type 3 family.

It catalyses the reaction (S)-malate + NAD(+) = oxaloacetate + NADH + H(+). In terms of biological role, catalyzes the reversible oxidation of malate to oxaloacetate. The protein is Malate dehydrogenase of Heliobacterium modesticaldum (strain ATCC 51547 / Ice1).